Here is a 143-residue protein sequence, read N- to C-terminus: Ribosome-binding factor A (143 aa).

Residues 1–20 are disordered; sequence MRFMGKNKFHTGPGPSQRQL.

This sequence belongs to the RbfA family. As to quaternary structure, monomer. Binds 30S ribosomal subunits, but not 50S ribosomal subunits or 70S ribosomes.

It is found in the cytoplasm. Functionally, one of several proteins that assist in the late maturation steps of the functional core of the 30S ribosomal subunit. Associates with free 30S ribosomal subunits (but not with 30S subunits that are part of 70S ribosomes or polysomes). Required for efficient processing of 16S rRNA. May interact with the 5'-terminal helix region of 16S rRNA. This Roseobacter denitrificans (strain ATCC 33942 / OCh 114) (Erythrobacter sp. (strain OCh 114)) protein is Ribosome-binding factor A.